The primary structure comprises 544 residues: Esterase P (544 aa).

A signal peptide spans 1 to 19; it reads MSIFKRLLCLTLLWIAALE. An N-linked (GlcNAc...) asparagine glycan is attached at N75. A disulfide bridge links C83 with C102. N114 is a glycosylation site (N-linked (GlcNAc...) asparagine). The active-site Acyl-ester intermediate is the S206. An intrachain disulfide couples C258 to C270. N262 and N456 each carry an N-linked (GlcNAc...) asparagine glycan. Residue H466 is the Charge relay system of the active site. A disulfide bridge links C514 with C535.

Belongs to the type-B carboxylesterase/lipase family. In terms of assembly, monomer.

It localises to the secreted. The catalysed reaction is a carboxylic ester + H2O = an alcohol + a carboxylate + H(+). This is Esterase P (Est-P) from Drosophila melanogaster (Fruit fly).